The following is a 311-amino-acid chain: DNA replication terminus site-binding protein (311 aa).

This sequence belongs to the Tus family.

It localises to the cytoplasm. In terms of biological role, trans-acting protein required for termination of DNA replication. Binds to DNA replication terminator sequences (terA to terF) to prevent the passage of replication forks. The termination efficiency will be affected by the affinity of this protein for the terminator sequence. The polypeptide is DNA replication terminus site-binding protein (Yersinia pestis).